The chain runs to 467 residues: Serine/threonine-protein phosphatase 2A 56 kDa regulatory subunit epsilon isoform (467 aa).

A disordered region spans residues 1 to 40 (MSSAPTTPPSVDKVDGFSRKSVRKARQKRSQSSSQFRSQG). Ser2 carries the N-acetylserine modification. Position 7 is a phosphothreonine (Thr7). Basic residues predominate over residues 20–29 (KSVRKARQKR). 3 positions are modified to phosphoserine: Ser30, Ser32, and Ser34. The segment covering 30-40 (SQSSSQFRSQG) has biased composition (low complexity).

This sequence belongs to the phosphatase 2A regulatory subunit B56 family. As to quaternary structure, found in a complex with at least ARL2, PPP2CB; PPP2R1A, PPP2R2A, PPP2R5E and TBCD. PP2A consists of a common heterodimeric core enzyme, composed of a 36 kDa catalytic subunit (subunit C) and a 65 kDa constant regulatory subunit (PR65 or subunit A), that associates with a variety of regulatory subunits. Proteins that associate with the core dimer include three families of regulatory subunits B (the R2/B/PR55/B55, R3/B''/PR72/PR130/PR59 and R5/B'/B56 families), the 48 kDa variable regulatory subunit, viral proteins, and cell signaling molecules. Interacts with SGO1. In terms of processing, phosphorylated on serine residues.

The protein resides in the cytoplasm. Its function is as follows. The B regulatory subunit might modulate substrate selectivity and catalytic activity, and might also direct the localization of the catalytic enzyme to a particular subcellular compartment. The chain is Serine/threonine-protein phosphatase 2A 56 kDa regulatory subunit epsilon isoform (PPP2R5E) from Homo sapiens (Human).